The following is a 309-amino-acid chain: Wall-associated proteinase (309 aa).

N-linked (GlcNAc...) asparagine glycans are attached at residues Asn-190 and Asn-295.

It localises to the secreted. The protein localises to the cell wall. The protein resides in the membrane. May participate in wall plasticization and/or intussusception or in cell wall turnover. The chain is Wall-associated proteinase from Coccidioides posadasii (strain RMSCC 757 / Silveira) (Valley fever fungus).